The chain runs to 940 residues: Gamma-aminobutyric acid type B receptor subunit 2 (940 aa).

Positions 1–40 (MASPPSSGQPRPPPPPPPPARLLLPLLLSLLLWLAPGAWG) are cleaved as a signal peptide. Over 41–482 (WTRGAPRPPP…LRKISLPLYS (442 aa)) the chain is Extracellular. An N-linked (GlcNAc...) asparagine glycan is attached at Asn-89. Cystine bridges form between Cys-107–Cys-134, Cys-236–Cys-265, and Cys-264–Cys-301. 4 N-linked (GlcNAc...) asparagine glycosylation sites follow: Asn-297, Asn-388, Asn-403, and Asn-452. A helical transmembrane segment spans residues 483–503 (ILSALTILGMIMASAFLFFNI). At 504–521 (KNRNQKLIKMSSPYMNNL) the chain is on the cytoplasmic side. The helical transmembrane segment at 522 to 542 (IILGGMLSYASIFLFGLDGSF) threads the bilayer. Over 543-550 (VSEKTFET) the chain is Extracellular. Residues 551–571 (LCTVRTWILTVGYTTAFGAMF) form a helical membrane-spanning segment. Residues 572–596 (AKTWRVHAIFKNVKMKKKIIKDQKL) are Cytoplasmic-facing. A helical transmembrane segment spans residues 597 to 617 (LVIVGGMLLIDLCILICWQAV). At 618–653 (DPLRRTVERYSMEPDPAGRDISIRPLLEHCENTHMT) the chain is on the extracellular side. A helical transmembrane segment spans residues 654-674 (IWLGIVYAYKGLLMLFGCFLA). Residues 675 to 690 (WETRNVSIPALNDSKY) lie on the Cytoplasmic side of the membrane. Residues 691–711 (IGMSVYNVGIMCIIGAAVSFL) form a helical membrane-spanning segment. The Extracellular portion of the chain corresponds to 712–719 (TRDQPNVQ). Residues 720 to 740 (FCIVALVIIFCSTITLCLVFV) form a helical membrane-spanning segment. Residues 741–940 (PKLITLRTNP…PSFRVMVSGL (200 aa)) lie on the Cytoplasmic side of the membrane. Residues 762–789 (TQNQKKEDSKTSTSVTSVNQASTSRLEG) form a disordered region. The span at 772-786 (TSTSVTSVNQASTSR) shows a compositional bias: polar residues. Ser-775 and Ser-778 each carry phosphoserine. Residues 780–818 (NQASTSRLEGLQSENHRLRMKITELDKDLEEVTMQLQDT) are a coiled coil. Thr-818 is subject to Phosphothreonine. Residues Ser-883, Ser-892, Ser-912, Ser-915, Ser-919, and Ser-923 each carry the phosphoserine modification.

The protein belongs to the G-protein coupled receptor 3 family. GABA-B receptor subfamily. Heterodimer of GABBR1 and GABBR2. Homodimers may form, but are inactive. Interacts (via C-terminus) with ATF4 (via leucine zipper domain). Interacts with KCTD8, KCTD12 and KCTD16; this interaction determines the pharmacology and kinetics of the receptor response, the KCTD proteins markedly accelerating the GABA-B response, although to different extents. Highly expressed in areas of the brain including thalamic nuclei, the hippocampus, cerebellar Purkinje cells and the medial habenula, and moderately expressed in the cerebral cortex, certain anterioventral thalamic nuclei, dorsal medial hypothalamic nucleus and suprachiasmatic nuclei. Also weakly expressed in the testis.

The protein resides in the cell membrane. Its subcellular location is the postsynaptic cell membrane. It localises to the perikaryon. It is found in the cell projection. The protein localises to the dendrite. Its function is as follows. Component of a heterodimeric G-protein coupled receptor for GABA, formed by GABBR1 and GABBR2. Within the heterodimeric GABA receptor, only GABBR1 seems to bind agonists, while GABBR2 mediates coupling to G proteins. Ligand binding causes a conformation change that triggers signaling via guanine nucleotide-binding proteins (G proteins) and modulates the activity of down-stream effectors, such as adenylate cyclase. Signaling inhibits adenylate cyclase, stimulates phospholipase A2, activates potassium channels, inactivates voltage-dependent calcium-channels and modulates inositol phospholipid hydrolysis. Plays a critical role in the fine-tuning of inhibitory synaptic transmission. Pre-synaptic GABA receptor inhibits neurotransmitter release by down-regulating high-voltage activated calcium channels, whereas postsynaptic GABA receptor decreases neuronal excitability by activating a prominent inwardly rectifying potassium (Kir) conductance that underlies the late inhibitory postsynaptic potentials. Not only implicated in synaptic inhibition but also in hippocampal long-term potentiation, slow wave sleep, muscle relaxation and antinociception. This is Gamma-aminobutyric acid type B receptor subunit 2 (Gabbr2) from Rattus norvegicus (Rat).